A 169-amino-acid chain; its full sequence is Putative outer membrane protein BBA03 (169 aa).

It localises to the cell outer membrane. This Borreliella burgdorferi (strain ATCC 35210 / DSM 4680 / CIP 102532 / B31) (Borrelia burgdorferi) protein is Putative outer membrane protein BBA03.